Here is a 632-residue protein sequence, read N- to C-terminus: 2-oxoacid:ferredoxin oxidoreductase subunit alpha (632 aa).

The short motif at 254–258 (YPITP) is the YPITP motif element. Threonine 257 and arginine 345 together coordinate substrate.

In terms of assembly, heterodimer composed of an alpha and a beta subunit.

It carries out the reaction a 2-oxocarboxylate + 2 oxidized [2Fe-2S]-[ferredoxin] + CoA = an acyl-CoA + 2 reduced [2Fe-2S]-[ferredoxin] + CO2 + H(+). In terms of biological role, catalyzes the coenzyme A-dependent oxidative decarboxylation of different 2-oxoacids such as 2-oxoglutarate, pyruvate and 2-oxobutyrate to form their CoA derivatives. This Saccharolobus solfataricus (Sulfolobus solfataricus) protein is 2-oxoacid:ferredoxin oxidoreductase subunit alpha.